A 543-amino-acid polypeptide reads, in one-letter code: Serine/threonine-protein kinase PkaA (543 aa).

The Protein kinase domain maps to 8 to 276 (YLLEEPLGRG…ENLARGLRVV (269 aa)). Residues 14–22 (LGRGATGTV) and K48 contribute to the ATP site. The Proton acceptor role is filled by D142. The interval 303–480 (PAPAQVPGAP…RQRSANPMRI (178 aa)) is disordered. The segment covering 352-361 (VMPPVPPGQP) has biased composition (pro residues). Composition is skewed to low complexity over residues 407–420 (RQVS…RQAP) and 428–451 (PGYG…QPQR). Residues 452 to 461 (YAPPPAPEPQ) are compositionally biased toward pro residues.

It belongs to the protein kinase superfamily. Ser/Thr protein kinase family. Autophosphorylated mainly at Thr and slightly at Ser.

The catalysed reaction is L-seryl-[protein] + ATP = O-phospho-L-seryl-[protein] + ADP + H(+). It catalyses the reaction L-threonyl-[protein] + ATP = O-phospho-L-threonyl-[protein] + ADP + H(+). The chain is Serine/threonine-protein kinase PkaA (pkaA) from Streptomyces coelicolor (strain ATCC BAA-471 / A3(2) / M145).